Here is a 546-residue protein sequence, read N- to C-terminus: UDP-glycosyltransferase FPY2 (546 aa).

The signal sequence occupies residues 1-20 (MSLPKAQILVVVTVGGSTNS). A helical membrane pass occupies residues 517–537 (LNNIDVALLFFILLGIISWIT).

This sequence belongs to the glycosyltransferase 28 family.

It is found in the membrane. It participates in secondary metabolite biosynthesis. UDP-glycosyltransferase; part of the gene cluster that mediates the biosynthesis of the gamma-pyrones fusapyrone (FPY) and deoxyfusapyrone (dFPY). FPY is an undecaketide and thus likely synthesized by the polyketide synthase FPY1 from acetyl-CoA functioning as starter unit and the addition of 10 malonyl-CoA extender units by successive Claisen-condensations. Next to this, FPY shares some rare features: C-glycosylated 4-deoxyglucose at C-3, a gem-dimethyl group at C-13, and an alpha-beta to beta-gamma double bond shift at C-20. During FPY biosynthesis mono-C-methyl groups are transferred to the tetra-, penta-, hexa- and heptaketide, while two C-methyl groups are transferred to the nonaketide, suggesting that the CMet domain is programmed to selectively catalyze two successive C-alpha-methylation reactions of the nonaketide, while other alpha-carbons are non- or mono-methylated only. While the origin of the 4'-deoxyglucose moiety remains opaque, its transfer to C-3 is most likely mediated by the C-glycosyltransferase FPY2. Next to this, the hydroxyl group present at C-33 and discriminating between FPY and dFPY, is likely to be installed by the cytochrome P450 monooxygenase FPY7. No putative function can be predicted for the remaining genes FPY3-FPY6. This chain is UDP-glycosyltransferase FPY2, found in Fusarium mangiferae (Mango malformation disease fungus).